An 85-amino-acid chain; its full sequence is Neurotoxin beta-KTx 14.3 (85 aa).

Positions 1 to 20 (MKQYIFFLALIVLTATFAEA) are cleaved as a signal peptide. The propeptide occupies 21–37 (GKKTEILDKVKKVFSKG). The region spanning 49 to 85 (ELGCPFIEKWCEDHCESKKQVGKCENFDCSCVKLGGK) is the BetaSPN-type CS-alpha/beta domain. 3 disulfides stabilise this stretch: Cys52-Cys72, Cys59-Cys77, and Cys63-Cys79.

The protein belongs to the long chain scorpion toxin family. Class 2 subfamily. Expressed by the venom gland.

The protein resides in the secreted. Toxin with activity on voltage-gated potassium channels. Moderately and reversibly blocks up to 50% of the activity of Kv7.1/KCNQ1 (tested at 22 uM). 3D-structure modeling of the KCNQ1-toxin complex shows that the toxin interacts with the channel pore domain. Additionally, shows a very weak effect to block voltage-gated potassium channel Kv1.1/KCNA1. Its function is as follows. Has a very weak effect to block voltage-gated potassium channel Kv1.1/KCNA1. This Lychas mucronatus (Chinese swimming scorpion) protein is Neurotoxin beta-KTx 14.3.